We begin with the raw amino-acid sequence, 270 residues long: tRNA pseudouridine synthase A (270 aa).

Catalysis depends on aspartate 60, which acts as the Nucleophile. An RNA binding region spans residues 107-111 (FHARF). Tyrosine 118 is a substrate binding site. The segment at 168 to 172 (QCQSR) is interaction with tRNA.

This sequence belongs to the tRNA pseudouridine synthase TruA family. In terms of assembly, homodimer.

It carries out the reaction uridine(38/39/40) in tRNA = pseudouridine(38/39/40) in tRNA. Its function is as follows. Formation of pseudouridine at positions 38, 39 and 40 in the anticodon stem and loop of transfer RNAs. This chain is tRNA pseudouridine synthase A, found in Shigella boydii serotype 4 (strain Sb227).